A 287-amino-acid polypeptide reads, in one-letter code: Lectin 10 (287 aa).

Over 1–11 (MALSNLKSNRT) the chain is Cytoplasmic. Residues 12-31 (LSSSLITIFIISLFLQYHNI) form a helical membrane-spanning segment. The Extracellular segment spans residues 32 to 287 (KSQSSWQSRQ…IINWSFESAL (256 aa)). 4 N-linked (GlcNAc...) asparagine glycosylation sites follow: Asn-124, Asn-147, Asn-243, and Asn-280.

It belongs to the leguminous lectin family.

It localises to the membrane. Its function is as follows. May be involved in arbuscular mycorrhizal (AM) symbiosis with AM fungi. The protein is Lectin 10 of Medicago truncatula (Barrel medic).